The sequence spans 81 residues: MSGSTGERPFSDIVTSIRYWVIHSITIPMLFIAGWLFVSTGLAYDVFGTPRPDQYFTQERQELPIISDRYKASQQIQEFNK.

The helical transmembrane segment at 21–35 (VIHSITIPMLFIAGW) threads the bilayer. Heme is bound at residue His-23.

This sequence belongs to the PsbE/PsbF family. In terms of assembly, heterodimer of an alpha subunit and a beta subunit. PSII is composed of 1 copy each of membrane proteins PsbA, PsbB, PsbC, PsbD, PsbE, PsbF, PsbH, PsbI, PsbJ, PsbK, PsbL, PsbM, PsbT, PsbX, PsbY, PsbZ, Psb30/Ycf12, peripheral proteins PsbO, CyanoQ (PsbQ), PsbU, PsbV and a large number of cofactors. It forms dimeric complexes. Requires heme b as cofactor.

It is found in the cellular thylakoid membrane. In terms of biological role, this b-type cytochrome is tightly associated with the reaction center of photosystem II (PSII). PSII is a light-driven water:plastoquinone oxidoreductase that uses light energy to abstract electrons from H(2)O, generating O(2) and a proton gradient subsequently used for ATP formation. It consists of a core antenna complex that captures photons, and an electron transfer chain that converts photonic excitation into a charge separation. The sequence is that of Cytochrome b559 subunit alpha from Rippkaea orientalis (strain PCC 8801 / RF-1) (Cyanothece sp. (strain PCC 8801)).